The primary structure comprises 504 residues: Maturase K (504 aa).

This sequence belongs to the intron maturase 2 family. MatK subfamily.

It is found in the plastid. The protein localises to the chloroplast. In terms of biological role, usually encoded in the trnK tRNA gene intron. Probably assists in splicing its own and other chloroplast group II introns. The sequence is that of Maturase K from Gossypium turneri (Cotton).